We begin with the raw amino-acid sequence, 191 residues long: Adenine phosphoribosyltransferase (191 aa).

This sequence belongs to the purine/pyrimidine phosphoribosyltransferase family. Homodimer.

It is found in the cytoplasm. The catalysed reaction is AMP + diphosphate = 5-phospho-alpha-D-ribose 1-diphosphate + adenine. It participates in purine metabolism; AMP biosynthesis via salvage pathway; AMP from adenine: step 1/1. Catalyzes a salvage reaction resulting in the formation of AMP, that is energically less costly than de novo synthesis. In Clavibacter sepedonicus (Clavibacter michiganensis subsp. sepedonicus), this protein is Adenine phosphoribosyltransferase.